Consider the following 179-residue polypeptide: Probable phosphopantothenoylcysteine decarboxylase (179 aa).

N124 is a binding site for substrate. C157 serves as the catalytic Proton donor.

It belongs to the HFCD (homooligomeric flavin containing Cys decarboxylase) superfamily. Requires FMN as cofactor.

The catalysed reaction is N-[(R)-4-phosphopantothenoyl]-L-cysteine + H(+) = (R)-4'-phosphopantetheine + CO2. The protein operates within cofactor biosynthesis; coenzyme A biosynthesis; CoA from (R)-pantothenate: step 3/5. Its function is as follows. Catalyzes the decarboxylation of 4'-phosphopantothenoylcysteine to 4'-phosphopantetheine. This is Probable phosphopantothenoylcysteine decarboxylase (coaC) from Streptococcus mutans serotype c (strain ATCC 700610 / UA159).